A 117-amino-acid chain; its full sequence is Large ribosomal subunit protein uL18 (117 aa).

This sequence belongs to the universal ribosomal protein uL18 family. Part of the 50S ribosomal subunit; part of the 5S rRNA/L5/L18/L25 subcomplex. Contacts the 5S and 23S rRNAs.

Functionally, this is one of the proteins that bind and probably mediate the attachment of the 5S RNA into the large ribosomal subunit, where it forms part of the central protuberance. In Onion yellows phytoplasma (strain OY-M), this protein is Large ribosomal subunit protein uL18.